A 234-amino-acid chain; its full sequence is Glutamine synthetase (234 aa).

The region spanning 1–234 is the GS catalytic domain; sequence KAQEPWFGIE…TRLLVETTLL (234 aa). Positions 126–157 are disordered; it reads GSGGHVNFSNRQPESPPAGKQSRSSAKKLGKR.

The protein belongs to the glutamine synthetase family. As to quaternary structure, homooctamer.

The protein resides in the cytoplasm. It carries out the reaction L-glutamate + NH4(+) + ATP = L-glutamine + ADP + phosphate + H(+). The sequence is that of Glutamine synthetase from Dunaliella salina (Green alga).